Reading from the N-terminus, the 101-residue chain is Protein Tat (101 aa).

Residues 1 to 10 are compositionally biased toward basic and acidic residues; it reads MEPVDPRLEP. The interval 1–20 is disordered; it reads MEPVDPRLEPWNHPGSQPKT. Residues 1–24 form an interaction with human CREBBP region; that stretch reads MEPVDPRLEPWNHPGSQPKTACNN. The transactivation stretch occupies residues 1 to 48; sequence MEPVDPRLEPWNHPGSQPKTACNNCYCKRCCYHCLYCFTKKGLGISYG. 3 residues coordinate Zn(2+): C22, C25, and C27. The interval 22 to 37 is cysteine-rich; it reads CNNCYCKRCCYHCLYC. N6-acetyllysine; by host PCAF is present on K28. Zn(2+)-binding residues include C30, H33, C34, and C37. A core region spans residues 38–48; the sequence is FTKKGLGISYG. Over residues 48–58 the composition is skewed to basic residues; the sequence is GRKKRSQRRRT. The disordered stretch occupies residues 48 to 101; sequence GRKKRSQRRRTPQSSKSHQDLIPEQPLSQQQGDQTGQKKQKEALESKTEADPCD. Positions 49 to 57 match the Nuclear localization signal, RNA-binding (TAR), and protein transduction motif; the sequence is RKKRSQRRR. Residues 49 to 86 are interaction with the host capping enzyme RNGTT; that stretch reads RKKRSQRRRTPQSSKSHQDLIPEQPLSQQQGDQTGQKK. Residues K50 and K51 each carry the N6-acetyllysine; by host EP300 and GCN5L2 modification. R52 is subject to Asymmetric dimethylarginine; by host PRMT6. The segment covering 86-101 has biased composition (basic and acidic residues); sequence KQKEALESKTEADPCD.

Belongs to the lentiviruses Tat family. In terms of assembly, interacts with host CCNT1. Associates with the P-TEFb complex composed at least of Tat, P-TEFb (CDK9 and CCNT1), TAR RNA, RNA Pol II. Recruits the HATs CREBBP, TAF1/TFIID, EP300, PCAF and GCN5L2. Interacts with host KAT5/Tip60; this interaction targets the latter to degradation. Interacts with the host deacetylase SIRT1. Interacts with host capping enzyme RNGTT; this interaction stimulates RNGTT. Binds to host KDR, and to the host integrins ITGAV/ITGB3 and ITGA5/ITGB1. Interacts with host KPNB1/importin beta-1 without previous binding to KPNA1/importin alpha-1. Interacts with EIF2AK2. Interacts with host nucleosome assembly protein NAP1L1; this interaction may be required for the transport of Tat within the nucleus, since the two proteins interact at the nuclear rim. Interacts with host C1QBP/SF2P32; this interaction involves lysine-acetylated Tat. Interacts with the host chemokine receptors CCR2, CCR3 and CXCR4. Interacts with host DPP4/CD26; this interaction may trigger an anti-proliferative effect. Interacts with host LDLR. Interacts with the host extracellular matrix metalloproteinase MMP1. Interacts with host PRMT6; this interaction mediates Tat's methylation. Interacts with, and is ubiquitinated by MDM2/Hdm2. Interacts with host PSMC3 and HTATIP2. Interacts with STAB1; this interaction may overcome SATB1-mediated repression of IL2 and IL2RA (interleukin) in T cells by binding to the same domain than HDAC1. Interacts (when acetylated) with human CDK13, thereby increasing HIV-1 mRNA splicing and promoting the production of the doubly spliced HIV-1 protein Nef. Interacts with host TBP; this interaction modulates the activity of transcriptional pre-initiation complex. Interacts with host RELA. Interacts with host PLSCR1; this interaction negatively regulates Tat transactivation activity by altering its subcellular distribution. Post-translationally, asymmetrical arginine methylation by host PRMT6 seems to diminish the transactivation capacity of Tat and affects the interaction with host CCNT1. In terms of processing, acetylation by EP300, CREBBP, GCN5L2/GCN5 and PCAF regulates the transactivation activity of Tat. EP300-mediated acetylation of Lys-50 promotes dissociation of Tat from the TAR RNA through the competitive binding to PCAF's bromodomain. In addition, the non-acetylated Tat's N-terminus can also interact with PCAF. PCAF-mediated acetylation of Lys-28 enhances Tat's binding to CCNT1. Lys-50 is deacetylated by SIRT1. Polyubiquitination by host MDM2 does not target Tat to degradation, but activates its transactivation function and fosters interaction with CCNT1 and TAR RNA. Post-translationally, phosphorylated by EIF2AK2 on serine and threonine residues adjacent to the basic region important for TAR RNA binding and function. Phosphorylation of Tat by EIF2AK2 is dependent on the prior activation of EIF2AK2 by dsRNA.

It localises to the host nucleus. Its subcellular location is the host nucleolus. The protein localises to the host cytoplasm. It is found in the secreted. In terms of biological role, transcriptional activator that increases RNA Pol II processivity, thereby increasing the level of full-length viral transcripts. Recognizes a hairpin structure at the 5'-LTR of the nascent viral mRNAs referred to as the transactivation responsive RNA element (TAR) and recruits the cyclin T1-CDK9 complex (P-TEFb complex) that will in turn hyperphosphorylate the RNA polymerase II to allow efficient elongation. The CDK9 component of P-TEFb and other Tat-activated kinases hyperphosphorylate the C-terminus of RNA Pol II that becomes stabilized and much more processive. Other factors such as HTATSF1/Tat-SF1, SUPT5H/SPT5, and HTATIP2 are also important for Tat's function. Besides its effect on RNA Pol II processivity, Tat induces chromatin remodeling of proviral genes by recruiting the histone acetyltransferases (HATs) CREBBP, EP300 and PCAF to the chromatin. This also contributes to the increase in proviral transcription rate, especially when the provirus integrates in transcriptionally silent region of the host genome. To ensure maximal activation of the LTR, Tat mediates nuclear translocation of NF-kappa-B by interacting with host RELA. Through its interaction with host TBP, Tat may also modulate transcription initiation. Tat can reactivate a latently infected cell by penetrating in it and transactivating its LTR promoter. In the cytoplasm, Tat is thought to act as a translational activator of HIV-1 mRNAs. Its function is as follows. Extracellular circulating Tat can be endocytosed by surrounding uninfected cells via the binding to several surface receptors such as CD26, CXCR4, heparan sulfate proteoglycans (HSPG) or LDLR. Neurons are rarely infected, but they internalize Tat via their LDLR. Through its interaction with nuclear HATs, Tat is potentially able to control the acetylation-dependent cellular gene expression. Modulates the expression of many cellular genes involved in cell survival, proliferation or in coding for cytokines or cytokine receptors. Tat plays a role in T-cell and neurons apoptosis. Tat induced neurotoxicity and apoptosis probably contribute to neuroAIDS. Circulating Tat also acts as a chemokine-like and/or growth factor-like molecule that binds to specific receptors on the surface of the cells, affecting many cellular pathways. In the vascular system, Tat binds to ITGAV/ITGB3 and ITGA5/ITGB1 integrins dimers at the surface of endothelial cells and competes with bFGF for heparin-binding sites, leading to an excess of soluble bFGF. The polypeptide is Protein Tat (Homo sapiens (Human)).